The following is a 499-amino-acid chain: MLNLFVGLDIYTGLLLLLALAFVLFYEAINGFHDTANAVAAVIYTRAMQPQLAVVMAAFFNFFGVLLGGLSVAYAIVHMLPTDLLLNMGSTHGLAMVFSMLLAAIIWNLGTWFFGLPASSSHTLIGAIIGIGLTNALLTGSSVMDALNLREVTKIFSSLIVSPIVGLVIAGGLIFLLRRYWSGTKKRDRIHRIPEDRKKKKGKRKPPFWTRIALIVSAAGVAFSHGANDGQKGIGLVMLVLVGIAPAGFVVNMNASGYEITRTRDAVTNFEHYLQQHPELPQKLIAMEPPLPAASTDGTQVTEFHCHPANTFDAIARVKTMLPGNMESYEPLSVSQRSQLRRIMLCISDTSAKLAKLPGVSKEDQNLLKKLRSDMLSTIEYAPVWIIMAVALALGIGTMIGWRRVAMTIGEKIGKRGMTYAQGMAAQMTAAVSIGLASYIGMPVSTTHVLSSAVAGTMVVDGGGLQRKTVTSILMAWVFTLPAAIFLSGGLYWIALQLI.

Transmembrane regions (helical) follow at residues 5–25 (FVGLDIYTGLLLLLALAFVLF), 52–72 (LAVVMAAFFNFFGVLLGGLSV), 94–114 (LAMVFSMLLAAIIWNLGTWFF), 124–144 (LIGAIIGIGLTNALLTGSSVM), 155–175 (IFSSLIVSPIVGLVIAGGLIF), 207–227 (PFWTRIALIVSAAGVAFSHGA), 233–253 (GIGLVMLVLVGIAPAGFVVNM), 382–402 (APVWIIMAVALALGIGTMIGW), 430–450 (AAVSIGLASYIGMPVSTTHVL), and 473–493 (ILMAWVFTLPAAIFLSGGLYW).

This sequence belongs to the inorganic phosphate transporter (PiT) (TC 2.A.20) family. Pit subfamily.

It is found in the cell inner membrane. The catalysed reaction is phosphate(in) + H(+)(in) = phosphate(out) + H(+)(out). Low-affinity inorganic phosphate transporter. The polypeptide is Low-affinity inorganic phosphate transporter PitB (Escherichia coli (strain K12)).